We begin with the raw amino-acid sequence, 270 residues long: GTP cyclohydrolase FolE2 (270 aa).

This sequence belongs to the GTP cyclohydrolase IV family.

The catalysed reaction is GTP + H2O = 7,8-dihydroneopterin 3'-triphosphate + formate + H(+). It functions in the pathway cofactor biosynthesis; 7,8-dihydroneopterin triphosphate biosynthesis; 7,8-dihydroneopterin triphosphate from GTP: step 1/1. Its function is as follows. Converts GTP to 7,8-dihydroneopterin triphosphate. The chain is GTP cyclohydrolase FolE2 from Cupriavidus pinatubonensis (strain JMP 134 / LMG 1197) (Cupriavidus necator (strain JMP 134)).